A 121-amino-acid chain; its full sequence is Large ribosomal subunit protein bL20 (121 aa).

This sequence belongs to the bacterial ribosomal protein bL20 family.

In terms of biological role, binds directly to 23S ribosomal RNA and is necessary for the in vitro assembly process of the 50S ribosomal subunit. It is not involved in the protein synthesizing functions of that subunit. The sequence is that of Large ribosomal subunit protein bL20 from Polynucleobacter necessarius subsp. necessarius (strain STIR1).